We begin with the raw amino-acid sequence, 220 residues long: Protein myomaker (220 aa).

Position 1 (Met-1) is a topological domain, extracellular. Residues 2–22 form a helical membrane-spanning segment; it reads GAFIAKMLLPTISSLVFVPAA. Residues 23-37 are Cytoplasmic-facing; sequence SVAAKRGFHMEAMVY. The helical transmembrane segment at 38 to 58 threads the bilayer; sequence FFTMFFTAIYHACDGPGLSIL. Residues 59-64 lie on the Extracellular side of the membrane; it reads CFMKYD. A helical membrane pass occupies residues 65-85; it reads ILEYFSVYGTAISMWVTLLAL. The Cytoplasmic portion of the chain corresponds to 86–93; the sequence is GDFDEPKR. A helical membrane pass occupies residues 94–110; it reads SSLTMFGVLTAAVRIYQ. The Extracellular segment spans residues 111–112; it reads DR. The chain crosses the membrane as a helical span at residues 113–133; that stretch reads LGYGIYSGPIGTAVFMITVKW. Over 134 to 153 the chain is Cytoplasmic; the sequence is LQKMKEKKGLYPDKSVYTQQ. Residues 154–174 form a helical membrane-spanning segment; it reads VGPGCCFGALALMLRFYFEEW. Residue Asp-175 is a topological domain, extracellular. Residues 176-196 form a helical membrane-spanning segment; sequence YAYVHSFYHVSLAMSFILLLP. Residues 197 to 220 are Cytoplasmic-facing; it reads KKNRYAGTGRNAAKLNCYTLCCCV.

Belongs to the TMEM8 family.

It localises to the cell membrane. Functionally, myoblast-specific protein that mediates myoblast fusion, an essential step for the formation of multi-nucleated muscle fibers. Actively participates in the membrane fusion reaction by mediating the mixing of cell membrane lipids (hemifusion) upstream of mymx. The protein is Protein myomaker of Danio rerio (Zebrafish).